The sequence spans 72 residues: Sec-independent protein translocase protein TatA (72 aa).

Residues 1–21 form a helical membrane-spanning segment; the sequence is MLGGISIWQLLIVLAILVLIF.

The protein belongs to the TatA/E family. The Tat system comprises two distinct complexes: a TatABC complex, containing multiple copies of TatA, TatB and TatC subunits, and a separate TatA complex, containing only TatA subunits. Substrates initially bind to the TatABC complex, which probably triggers association of the separate TatA complex to form the active translocon.

The protein localises to the cell inner membrane. Functionally, part of the twin-arginine translocation (Tat) system that transports large folded proteins containing a characteristic twin-arginine motif in their signal peptide across membranes. TatA could form the protein-conducting channel of the Tat system. The chain is Sec-independent protein translocase protein TatA from Marinomonas sp. (strain MWYL1).